The chain runs to 378 residues: Bifunctional enzyme IspD/IspF (378 aa).

A 2-C-methyl-D-erythritol 4-phosphate cytidylyltransferase region spans residues 1–222 (MTETVAIIVA…RLLSPTGAPR (222 aa)). Residues 222–378 (RIGKGYDVHE…EAVALLMPKG (157 aa)) form a 2-C-methyl-D-erythritol 2,4-cyclodiphosphate synthase region. Positions 228 and 230 each coordinate a divalent metal cation. 4-CDP-2-C-methyl-D-erythritol 2-phosphate is bound by residues 228–230 (DVH) and 254–255 (HS). His-262 contributes to the a divalent metal cation binding site. Residues 276 to 278 (DIG), 352 to 355 (TTTE), Phe-359, and Arg-362 each bind 4-CDP-2-C-methyl-D-erythritol 2-phosphate.

It in the N-terminal section; belongs to the IspD/TarI cytidylyltransferase family. IspD subfamily. This sequence in the C-terminal section; belongs to the IspF family. It depends on a divalent metal cation as a cofactor.

It catalyses the reaction 2-C-methyl-D-erythritol 4-phosphate + CTP + H(+) = 4-CDP-2-C-methyl-D-erythritol + diphosphate. The catalysed reaction is 4-CDP-2-C-methyl-D-erythritol 2-phosphate = 2-C-methyl-D-erythritol 2,4-cyclic diphosphate + CMP. It participates in isoprenoid biosynthesis; isopentenyl diphosphate biosynthesis via DXP pathway; isopentenyl diphosphate from 1-deoxy-D-xylulose 5-phosphate: step 2/6. It functions in the pathway isoprenoid biosynthesis; isopentenyl diphosphate biosynthesis via DXP pathway; isopentenyl diphosphate from 1-deoxy-D-xylulose 5-phosphate: step 4/6. In terms of biological role, bifunctional enzyme that catalyzes the formation of 4-diphosphocytidyl-2-C-methyl-D-erythritol from CTP and 2-C-methyl-D-erythritol 4-phosphate (MEP) (IspD), and catalyzes the conversion of 4-diphosphocytidyl-2-C-methyl-D-erythritol 2-phosphate (CDP-ME2P) to 2-C-methyl-D-erythritol 2,4-cyclodiphosphate (ME-CPP) with a corresponding release of cytidine 5-monophosphate (CMP) (IspF). The chain is Bifunctional enzyme IspD/IspF from Hyphomonas neptunium (strain ATCC 15444).